We begin with the raw amino-acid sequence, 228 residues long: Gliolectin (228 aa).

Over 1-120 (MLCPPMALGP…NPKAVSQAPR (120 aa)) the chain is Cytoplasmic. Residues 121–137 (GMALTPAQISASAKLIL) traverse the membrane as a helical; Signal-anchor for type II membrane protein segment. Topologically, residues 138 to 228 (QKCPESDRKK…GTSELADQKQ (91 aa)) are extracellular. The interval 141-228 (PESDRKKSNG…GTSELADQKQ (88 aa)) is disordered. 6 N-linked (GlcNAc...) asparagine glycosylation sites follow: Asn149, Asn156, Asn198, Asn199, Asn205, and Asn218. Positions 195-213 (NNNNNSSSSNNNSNMNINN) are enriched in low complexity. Over residues 218 to 228 (NGTSELADQKQ) the composition is skewed to polar residues.

In terms of tissue distribution, expressed by a subset of glial cells found at the midline of the embryo stage 12 nervous system. Expression is highest during the formation of the embryonic axonal commissures, a process requiring midline glial cell function (at protein level).

Its subcellular location is the membrane. Its function is as follows. Has a role in intercellular carbohydrate-mediated cell adhesion. In Drosophila melanogaster (Fruit fly), this protein is Gliolectin.